Here is a 364-residue protein sequence, read N- to C-terminus: Putative protein C31H2.4 (364 aa).

2 VOC domains span residues 6–134 (AIHH…LGEF) and 161–320 (LMDH…IFSK). Histidine 164, histidine 248, and glutamate 331 together coordinate Fe cation.

It belongs to the 4HPPD family. The cofactor is Fe cation.

The protein is Putative protein C31H2.4 of Caenorhabditis elegans.